A 41-amino-acid polypeptide reads, in one-letter code: uncharacterized protein (41 aa).

This is an uncharacterized protein from Rickettsia prowazekii (strain Madrid E).